The following is a 252-amino-acid chain: Imidazole glycerol phosphate synthase subunit HisF (252 aa).

Active-site residues include D11 and D130.

This sequence belongs to the HisA/HisF family. As to quaternary structure, heterodimer of HisH and HisF.

The protein localises to the cytoplasm. It carries out the reaction 5-[(5-phospho-1-deoxy-D-ribulos-1-ylimino)methylamino]-1-(5-phospho-beta-D-ribosyl)imidazole-4-carboxamide + L-glutamine = D-erythro-1-(imidazol-4-yl)glycerol 3-phosphate + 5-amino-1-(5-phospho-beta-D-ribosyl)imidazole-4-carboxamide + L-glutamate + H(+). It functions in the pathway amino-acid biosynthesis; L-histidine biosynthesis; L-histidine from 5-phospho-alpha-D-ribose 1-diphosphate: step 5/9. IGPS catalyzes the conversion of PRFAR and glutamine to IGP, AICAR and glutamate. The HisF subunit catalyzes the cyclization activity that produces IGP and AICAR from PRFAR using the ammonia provided by the HisH subunit. In Halothermothrix orenii (strain H 168 / OCM 544 / DSM 9562), this protein is Imidazole glycerol phosphate synthase subunit HisF.